Reading from the N-terminus, the 136-residue chain is Ribonuclease P protein component (136 aa).

The segment at 116-136 (RPQRAAAKGSAGTTQKGTPRA) is disordered. Over residues 126–136 (AGTTQKGTPRA) the composition is skewed to polar residues.

The protein belongs to the RnpA family. Consists of a catalytic RNA component (M1 or rnpB) and a protein subunit.

The enzyme catalyses Endonucleolytic cleavage of RNA, removing 5'-extranucleotides from tRNA precursor.. In terms of biological role, RNaseP catalyzes the removal of the 5'-leader sequence from pre-tRNA to produce the mature 5'-terminus. It can also cleave other RNA substrates such as 4.5S RNA. The protein component plays an auxiliary but essential role in vivo by binding to the 5'-leader sequence and broadening the substrate specificity of the ribozyme. The protein is Ribonuclease P protein component of Pseudarthrobacter chlorophenolicus (strain ATCC 700700 / DSM 12829 / CIP 107037 / JCM 12360 / KCTC 9906 / NCIMB 13794 / A6) (Arthrobacter chlorophenolicus).